The primary structure comprises 388 residues: Chorismate synthase (388 aa).

Positions 39 and 45 each coordinate NADP(+). The interval 95–118 (EKNEKSRRVSRPRPGHADLVGGMK) is disordered. Residues 130-132 (RSS), 251-252 (NA), glycine 296, 311-315 (KPIPT), and arginine 337 each bind FMN.

This sequence belongs to the chorismate synthase family. Homotetramer. Requires FMNH2 as cofactor.

The enzyme catalyses 5-O-(1-carboxyvinyl)-3-phosphoshikimate = chorismate + phosphate. It participates in metabolic intermediate biosynthesis; chorismate biosynthesis; chorismate from D-erythrose 4-phosphate and phosphoenolpyruvate: step 7/7. Its function is as follows. Catalyzes the anti-1,4-elimination of the C-3 phosphate and the C-6 proR hydrogen from 5-enolpyruvylshikimate-3-phosphate (EPSP) to yield chorismate, which is the branch point compound that serves as the starting substrate for the three terminal pathways of aromatic amino acid biosynthesis. This reaction introduces a second double bond into the aromatic ring system. In Listeria monocytogenes serotype 4b (strain F2365), this protein is Chorismate synthase.